The primary structure comprises 362 residues: G-protein coupled receptor 4 (362 aa).

Residues 1-8 (MGNRTLEG) lie on the Extracellular side of the membrane. Asn3 carries N-linked (GlcNAc...) asparagine glycosylation. A helical transmembrane segment spans residues 9 to 45 (CHVDSRMDHLFPPSLYIFVIGVGLPTNCLALWAAYRQ). Intrachain disulfides connect Cys9–Cys258 and Cys90–Cys168. The Cytoplasmic portion of the chain corresponds to 46-49 (VRQR). The helical transmembrane segment at 50 to 80 (NELGVYLMNLSIADLLYICTLPLWVDYFLHH) threads the bilayer. Topologically, residues 81–85 (DNWIH) are extracellular. A helical membrane pass occupies residues 86-121 (GPGSCKLFGFIFYTNIYISIAFLCCISVDRYLAVAH). Over 122-129 (PLRFARLR) the chain is Cytoplasmic. A helical membrane pass occupies residues 130 to 156 (RVKTAVAVSSVVWATELGANSAPLFHD). The Extracellular portion of the chain corresponds to 157–172 (ELFRDRYNHTFCFEKF). Residues 157-172 (ELFRDRYNHTFCFEKF) form an extracellular loop 2 (ECL2) region. A glycan (N-linked (GlcNAc...) asparagine) is linked at Asn164. The helical transmembrane segment at 173–210 (PMEGWVAWMNLYRVFVGFLFPWALMLLSYRGILRAVRG) threads the bilayer. Residues 211-214 (SVST) are Cytoplasmic-facing. Residues 215-250 (ERQEKVKIKRLALSLIAIVLVCFAPYHVLLLSRSAV) traverse the membrane as a helical segment. The Extracellular segment spans residues 251-260 (YLRRPRDCGF). A helical transmembrane segment spans residues 261 to 289 (EERVFSAYHSSLAFTSLNCVADPILYCLV). The Cytoplasmic segment spans residues 290-362 (NEGARSDVAK…VQLKMLPPAQ (73 aa)).

It belongs to the G-protein coupled receptor 1 family.

It localises to the cell membrane. With respect to regulation, activated by a network of residues that connects an extracellular-facing cavity to Glu-145, a conserved charged residue buried in the transmembrane core of the receptor. Protonation likely drives conformational changes in extracellular loop 2 (ECL2), which stabilizes movement of transmembrane 3 (TM3) and a series of rearrangements that connect the extracellular-facing cavity to Glu-145, a residue only conserved in proton-sensing G-protein coupled receptors. Its function is as follows. Proton-sensing G-protein coupled receptor activated by extracellular pH, which is required to monitor pH changes and generate adaptive reactions. Activated by an optimal pH of 6.8-7.2. Ligand binding causes a conformation change that triggers signaling via guanine nucleotide-binding proteins (G proteins) and modulates the activity of downstream effectors, such as adenylate cyclase. GPR4 is mainly coupled to G(s) G proteins and mediates activation of adenylate cyclase activity. May also couple with G(q) and G(12)/G(13) G proteins. Acts as a key regulator of respiratory sensitivity to CO2/H(+) in brain retrotrapezoid nucleus neurons: acts by mediating detection of protons generated by the formation of carbonic acid in the blood, an important mechanism to impulse to breathe. Also acts as a regulator of acid secretion in the kidney collecting duct by maintaining acid-base homeostasis in the kidney. Acidosis-induced GPR4 activation increases paracellular gap formation and permeability of vascular endothelial cells, possibly through the G(12)/G(13)/Rho GTPase signaling pathway. The chain is G-protein coupled receptor 4 (GPR4) from Bos taurus (Bovine).